The following is a 229-amino-acid chain: MSVSAMFVALQGALTADQDIREEIRKVVQALEQTAREMLTLPQGVHQGAGFQDIPKKCQKAREHFGTVRTQMESLKTKFPADQYYRFHEHWRFVLQRLVFLASFVVYLETETLVTREAVAEILGIEADRERGFHLDIEDYLSGVLTLASELARLAVNSVTAGDYSRPLRISTFINELDSGFRLLNLKNDSLRKRYDGLKYDVKKIEEVVYDLSIRGLNKEATGGAGGEK.

The segment at 86–90 (RFHEH) is DNA/RNA binding. Positions 177–198 (LDSGFRLLNLKNDSLRKRYDGL) are leucine-zipper.

Belongs to the translin family. As to quaternary structure, ring-shaped heterooctamer of six TSN and two TSNAX subunits, DNA/RNA binding occurs inside the ring.

It is found in the cytoplasm. The protein localises to the nucleus. Its function is as follows. Exhibits both single-stranded and double-stranded endoribonuclease activity. May act as an activator of RNA-induced silencing complex (RISC) by facilitating endonucleolytic cleavage of the siRNA passenger strand. DNA-binding protein that specifically recognizes consensus sequences at the breakpoint junctions in chromosomal translocations, mostly involving immunoglobulin (Ig)/T-cell receptor gene segments. Seems to recognize single-stranded DNA ends generated by staggered breaks occurring at recombination hot spots. This Gallus gallus (Chicken) protein is Translin (TSN).